The primary structure comprises 304 residues: Probable cobalamin biosynthesis protein CobD (304 aa).

Helical transmembrane passes span 2 to 22, 50 to 70, 73 to 93, 147 to 167, and 284 to 304; these read IVVL…KEYI, ILFS…AVYL, FILV…FSIT, VDGY…GAFI, and AAYS…AVFL.

Belongs to the CobD/CbiB family.

It localises to the cell membrane. The protein operates within cofactor biosynthesis; adenosylcobalamin biosynthesis. Its function is as follows. Converts cobyric acid to cobinamide by the addition of aminopropanol on the F carboxylic group. The sequence is that of Probable cobalamin biosynthesis protein CobD from Thermoplasma volcanium (strain ATCC 51530 / DSM 4299 / JCM 9571 / NBRC 15438 / GSS1).